The following is a 138-amino-acid chain: MLSPRKVKYRKKQRGRLSGEAQKGNEISFGEYGLVSLETYFITARQIEAARVAMTRRVKRGGKVWIRIFPDVPYTKKPAETRMGKGKGGVDHWNAPVKLGTVMFEMAGVPRELAEAAMMLASSKLPVKTTFVVRRDLR.

Over residues 1 to 15 (MLSPRKVKYRKKQRG) the composition is skewed to basic residues. The disordered stretch occupies residues 1 to 20 (MLSPRKVKYRKKQRGRLSGE).

It belongs to the universal ribosomal protein uL16 family. Part of the 50S ribosomal subunit.

Functionally, binds 23S rRNA and is also seen to make contacts with the A and possibly P site tRNAs. This chain is Large ribosomal subunit protein uL16, found in Borrelia turicatae (strain 91E135).